Consider the following 269-residue polypeptide: uncharacterized protein (269 aa).

Basic and acidic residues predominate over residues 181–191 (QKKELSPHEIA). Residues 181–203 (QKKELSPHEIAESPSSHSTSPMG) form a disordered region. Polar residues predominate over residues 193–202 (SPSSHSTSPM). A Phosphoserine modification is found at S200.

This is an uncharacterized protein from Schizosaccharomyces pombe (strain 972 / ATCC 24843) (Fission yeast).